A 334-amino-acid polypeptide reads, in one-letter code: Cytosolic Fe-S cluster assembly factor NBP35 (334 aa).

Cys-33, Cys-47, Cys-50, and Cys-56 together coordinate [4Fe-4S] cluster. 86–93 provides a ligand contact to ATP; sequence GKGGVGKS. 2 residues coordinate [4Fe-4S] cluster: Cys-259 and Cys-262.

It belongs to the Mrp/NBP35 ATP-binding proteins family. NUBP1/NBP35 subfamily. In terms of assembly, heterotetramer of 2 NBP35 and 2 CFD1 chains. Requires [4Fe-4S] cluster as cofactor.

It localises to the cytoplasm. The protein localises to the nucleus. Its function is as follows. Component of the cytosolic iron-sulfur (Fe/S) protein assembly (CIA) machinery. Required for maturation of extramitochondrial Fe-S proteins. The NBP35-CFD1 heterotetramer forms a Fe-S scaffold complex, mediating the de novo assembly of an Fe-S cluster and its transfer to target apoproteins. Required for biogenesis and export of both ribosomal subunits, which may reflect a role in assembly of the Fe/S clusters in RLI1, a protein which performs rRNA processing and ribosome export. The chain is Cytosolic Fe-S cluster assembly factor NBP35 from Candida glabrata (strain ATCC 2001 / BCRC 20586 / JCM 3761 / NBRC 0622 / NRRL Y-65 / CBS 138) (Yeast).